The following is a 175-amino-acid chain: NADH-quinone oxidoreductase subunit I (175 aa).

2 4Fe-4S ferredoxin-type domains span residues 69–98 and 115–144; these read KRDEQGRERCTSCFCCMWICPADAIYIEAA and KKFEIDLLRCIFCGMCEEACPKGAIYLDGP. Residues Cys78, Cys81, Cys84, Cys88, Cys124, Cys127, Cys130, and Cys134 each coordinate [4Fe-4S] cluster.

This sequence belongs to the complex I 23 kDa subunit family. In terms of assembly, NDH-1 is composed of 14 different subunits. Subunits NuoA, H, J, K, L, M, N constitute the membrane sector of the complex. Requires [4Fe-4S] cluster as cofactor.

The protein localises to the cell inner membrane. It carries out the reaction a quinone + NADH + 5 H(+)(in) = a quinol + NAD(+) + 4 H(+)(out). Functionally, NDH-1 shuttles electrons from NADH, via FMN and iron-sulfur (Fe-S) centers, to quinones in the respiratory chain. The immediate electron acceptor for the enzyme in this species is believed to be ubiquinone. Couples the redox reaction to proton translocation (for every two electrons transferred, four hydrogen ions are translocated across the cytoplasmic membrane), and thus conserves the redox energy in a proton gradient. The protein is NADH-quinone oxidoreductase subunit I of Leptospira interrogans serogroup Icterohaemorrhagiae serovar Lai (strain 56601).